A 276-amino-acid polypeptide reads, in one-letter code: F420-dependent methylenetetrahydromethanopterin dehydrogenase (276 aa).

This sequence belongs to the MTD family.

It carries out the reaction 5,10-methylenetetrahydromethanopterin + oxidized coenzyme F420-(gamma-L-Glu)(n) + 2 H(+) = 5,10-methenyl-5,6,7,8-tetrahydromethanopterin + reduced coenzyme F420-(gamma-L-Glu)(n). Its pathway is one-carbon metabolism; methanogenesis from CO(2); 5,10-methylene-5,6,7,8-tetrahydromethanopterin from 5,10-methenyl-5,6,7,8-tetrahydromethanopterin (coenzyme F420 route): step 1/1. In terms of biological role, catalyzes the reversible reduction of methenyl-H(4)MPT(+) to methylene-H(4)MPT. The protein is F420-dependent methylenetetrahydromethanopterin dehydrogenase of Methanococcus vannielii (strain ATCC 35089 / DSM 1224 / JCM 13029 / OCM 148 / SB).